The sequence spans 347 residues: Bombesin receptor-activated protein C6orf89 homolog (347 aa).

Residues 1-58 (MDLAANEISIYDKLSETVDLVRQTGHQCGMSEKAIEKFIRQLLEKNEPQRPPPQYPLL) are Cytoplasmic-facing. A helical membrane pass occupies residues 59 to 79 (IVVYKVLATLGLILLTAYFVI). The Extracellular segment spans residues 80–347 (QPFSPLAPEP…ICDGTAFSEL (268 aa)).

As to quaternary structure, homodimer. Interacts with BRS3. Interacts (via N-terminus) with SIN3B. Glycosylated.

The protein resides in the golgi apparatus membrane. It is found in the cytoplasm. Functionally, exhibits histone deacetylase (HDAC) enhancer properties. May play a role in cell cycle progression and wound repair of bronchial epithelial cells. This Pongo abelii (Sumatran orangutan) protein is Bombesin receptor-activated protein C6orf89 homolog.